The primary structure comprises 210 residues: Protein-methionine-sulfoxide reductase heme-binding subunit MsrQ (210 aa).

Helical transmembrane passes span Leu8 to Phe28, Val37 to Thr57, Leu75 to Leu95, Pro110 to Asn130, Leu147 to Leu167, and Glu169 to Thr189.

The protein belongs to the MsrQ family. Heterodimer of a catalytic subunit (MsrP) and a heme-binding subunit (MsrQ). It depends on FMN as a cofactor. The cofactor is heme b.

It is found in the cell inner membrane. In terms of biological role, part of the MsrPQ system that repairs oxidized periplasmic proteins containing methionine sulfoxide residues (Met-O), using respiratory chain electrons. Thus protects these proteins from oxidative-stress damage caused by reactive species of oxygen and chlorine generated by the host defense mechanisms. MsrPQ is essential for the maintenance of envelope integrity under bleach stress, rescuing a wide series of structurally unrelated periplasmic proteins from methionine oxidation. MsrQ provides electrons for reduction to the reductase catalytic subunit MsrP, using the quinone pool of the respiratory chain. The chain is Protein-methionine-sulfoxide reductase heme-binding subunit MsrQ from Pseudomonas savastanoi pv. phaseolicola (strain 1448A / Race 6) (Pseudomonas syringae pv. phaseolicola (strain 1448A / Race 6)).